A 590-amino-acid polypeptide reads, in one-letter code: Aspartate--tRNA(Asp/Asn) ligase (590 aa).

Residue Glu-173 coordinates L-aspartate. An aspartate region spans residues 197–200; the sequence is QIFK. Residue Arg-219 coordinates L-aspartate. Residues 219–221 and Gln-228 contribute to the ATP site; that span reads RDE. Position 450 (His-450) interacts with L-aspartate. Glu-484 is an ATP binding site. Arg-491 is an L-aspartate binding site. Residue 536–539 participates in ATP binding; the sequence is GLDR.

The protein belongs to the class-II aminoacyl-tRNA synthetase family. Type 1 subfamily. In terms of assembly, homodimer.

It is found in the cytoplasm. It carries out the reaction tRNA(Asx) + L-aspartate + ATP = L-aspartyl-tRNA(Asx) + AMP + diphosphate. Its function is as follows. Aspartyl-tRNA synthetase with relaxed tRNA specificity since it is able to aspartylate not only its cognate tRNA(Asp) but also tRNA(Asn). Reaction proceeds in two steps: L-aspartate is first activated by ATP to form Asp-AMP and then transferred to the acceptor end of tRNA(Asp/Asn). The sequence is that of Aspartate--tRNA(Asp/Asn) ligase from Coxiella burnetii (strain RSA 331 / Henzerling II).